The primary structure comprises 475 residues: Aspartyl/glutamyl-tRNA(Asn/Gln) amidotransferase subunit B (475 aa).

The protein belongs to the GatB/GatE family. GatB subfamily. Heterotrimer of A, B and C subunits.

The catalysed reaction is L-glutamyl-tRNA(Gln) + L-glutamine + ATP + H2O = L-glutaminyl-tRNA(Gln) + L-glutamate + ADP + phosphate + H(+). It catalyses the reaction L-aspartyl-tRNA(Asn) + L-glutamine + ATP + H2O = L-asparaginyl-tRNA(Asn) + L-glutamate + ADP + phosphate + 2 H(+). Functionally, allows the formation of correctly charged Asn-tRNA(Asn) or Gln-tRNA(Gln) through the transamidation of misacylated Asp-tRNA(Asn) or Glu-tRNA(Gln) in organisms which lack either or both of asparaginyl-tRNA or glutaminyl-tRNA synthetases. The reaction takes place in the presence of glutamine and ATP through an activated phospho-Asp-tRNA(Asn) or phospho-Glu-tRNA(Gln). The polypeptide is Aspartyl/glutamyl-tRNA(Asn/Gln) amidotransferase subunit B (Bacillus cereus (strain ZK / E33L)).